The chain runs to 294 residues: ATP phosphoribosyltransferase (294 aa).

It belongs to the ATP phosphoribosyltransferase family. Long subfamily. Mg(2+) is required as a cofactor.

It localises to the cytoplasm. It catalyses the reaction 1-(5-phospho-beta-D-ribosyl)-ATP + diphosphate = 5-phospho-alpha-D-ribose 1-diphosphate + ATP. It participates in amino-acid biosynthesis; L-histidine biosynthesis; L-histidine from 5-phospho-alpha-D-ribose 1-diphosphate: step 1/9. Its activity is regulated as follows. Feedback inhibited by histidine. Functionally, catalyzes the condensation of ATP and 5-phosphoribose 1-diphosphate to form N'-(5'-phosphoribosyl)-ATP (PR-ATP). Has a crucial role in the pathway because the rate of histidine biosynthesis seems to be controlled primarily by regulation of HisG enzymatic activity. The protein is ATP phosphoribosyltransferase of Chlorobium phaeovibrioides (strain DSM 265 / 1930) (Prosthecochloris vibrioformis (strain DSM 265)).